Consider the following 184-residue polypeptide: MGIEEKAPSGFMLAKVSDLVGLIRKSSLWPVTMGLACCAIEMMATGTPRFDISRFGMEVFRASPRQADLMIVSGRVSQKMAPVVRQVYDQMSEPKWVLSMGVCASSGGMFNNYAVVQGVDHILPVDIYLPGCPPRPEMLLNAILELHEQIRSEPLGANRAEAARAVEAAALRATPTHEMTGLLA.

The [4Fe-4S] cluster site is built by cysteine 37, cysteine 38, cysteine 103, and cysteine 132.

This sequence belongs to the complex I 20 kDa subunit family. NDH-1 is composed of 14 different subunits. Subunits NuoB, C, D, E, F, and G constitute the peripheral sector of the complex. Requires [4Fe-4S] cluster as cofactor.

It is found in the cell membrane. It catalyses the reaction a quinone + NADH + 5 H(+)(in) = a quinol + NAD(+) + 4 H(+)(out). Functionally, NDH-1 shuttles electrons from NADH, via FMN and iron-sulfur (Fe-S) centers, to quinones in the respiratory chain. The immediate electron acceptor for the enzyme in this species is believed to be a menaquinone. Couples the redox reaction to proton translocation (for every two electrons transferred, four hydrogen ions are translocated across the cytoplasmic membrane), and thus conserves the redox energy in a proton gradient. The sequence is that of NADH-quinone oxidoreductase subunit B from Beutenbergia cavernae (strain ATCC BAA-8 / DSM 12333 / CCUG 43141 / JCM 11478 / NBRC 16432 / NCIMB 13614 / HKI 0122).